Here is a 116-residue protein sequence, read N- to C-terminus: U30-theraphotoxin-Cg1b (116 aa).

The signal sequence occupies residues 1–17 (MKLCVLTIATLLVTATS). The propeptide occupies 18–53 (LETQKEIAEGNELTREETPSLVEHKEDEAAAASEKR). Residues 25–45 (AEGNELTREETPSLVEHKEDE) are disordered. Intrachain disulfides connect Cys-55/Cys-69, Cys-62/Cys-75, Cys-66/Cys-112, and Cys-68/Cys-88.

Belongs to the neurotoxin 03 (Tx2) family. 02 subfamily. Expressed by the venom gland.

It is found in the secreted. Probable ion channel inhibitor. This chain is U30-theraphotoxin-Cg1b, found in Chilobrachys guangxiensis (Chinese earth tiger tarantula).